The following is a 191-amino-acid chain: Oleosin 20.3 kDa (191 aa).

Ala2 carries the post-translational modification N-acetylalanine. Positions 2-54 are polar; that stretch reads ANVDRDRRVHVDRTDKRVHQPNYEDDVGFGGYGGYGAGSDYKSRGPSTNQILA. 2 consecutive transmembrane segments (helical) span residues 52–72 and 99–119; these read ILAL…AGLT and LTIG…LTGL. Residues 55–128 are hydrophobic; it reads LIAGVPIGGT…LSSVSWVLNY (74 aa).

Belongs to the oleosin family.

The protein localises to the lipid droplet. The protein resides in the membrane. In terms of biological role, may have a structural role to stabilize the lipid body during desiccation of the seed by preventing coalescence of the oil. Probably interacts with both lipid and phospholipid moieties of lipid bodies. May also provide recognition signals for specific lipase anchorage in lipolysis during seedling growth. The protein is Oleosin 20.3 kDa (OL2) of Arabidopsis thaliana (Mouse-ear cress).